The chain runs to 120 residues: U13-barytoxin-Tl1a (120 aa).

The signal sequence occupies residues 1–20 (MKTIIVFLSLLVLATKFGDA). Intrachain disulfides connect C75-C90, C82-C95, and C89-C109.

It belongs to the neurotoxin 14 (magi-1) family. 05 (ICK-7) subfamily. ICK-7 sub-subfamily. As to expression, expressed by the venom gland.

The protein localises to the secreted. Ion channel inhibitor. This is U13-barytoxin-Tl1a from Trittame loki (Brush-footed trapdoor spider).